Reading from the N-terminus, the 155-residue chain is SsrA-binding protein (155 aa).

The segment covering 127–149 (KKDYDKRNDMRKKEAKREMERTF) has biased composition (basic and acidic residues). The interval 127–155 (KKDYDKRNDMRKKEAKREMERTFKSKNQY) is disordered.

It belongs to the SmpB family.

It localises to the cytoplasm. Functionally, required for rescue of stalled ribosomes mediated by trans-translation. Binds to transfer-messenger RNA (tmRNA), required for stable association of tmRNA with ribosomes. tmRNA and SmpB together mimic tRNA shape, replacing the anticodon stem-loop with SmpB. tmRNA is encoded by the ssrA gene; the 2 termini fold to resemble tRNA(Ala) and it encodes a 'tag peptide', a short internal open reading frame. During trans-translation Ala-aminoacylated tmRNA acts like a tRNA, entering the A-site of stalled ribosomes, displacing the stalled mRNA. The ribosome then switches to translate the ORF on the tmRNA; the nascent peptide is terminated with the 'tag peptide' encoded by the tmRNA and targeted for degradation. The ribosome is freed to recommence translation, which seems to be the essential function of trans-translation. In Lysinibacillus sphaericus (strain C3-41), this protein is SsrA-binding protein.